Reading from the N-terminus, the 497-residue chain is mRNA cleavage and polyadenylation factor CLP1 (497 aa).

ATP-binding positions include Glu-34, Lys-73, and 157–162 (HSGKTS).

This sequence belongs to the Clp1 family. Clp1 subfamily. In terms of assembly, component of a pre-mRNA cleavage factor complex. Interacts directly with PCF11.

The protein localises to the nucleus. In terms of biological role, required for endonucleolytic cleavage during polyadenylation-dependent pre-mRNA 3'-end formation. In Debaryomyces hansenii (strain ATCC 36239 / CBS 767 / BCRC 21394 / JCM 1990 / NBRC 0083 / IGC 2968) (Yeast), this protein is mRNA cleavage and polyadenylation factor CLP1.